Consider the following 195-residue polypeptide: 7-methyl-GTP pyrophosphatase (195 aa).

Asp-71 functions as the Proton acceptor in the catalytic mechanism.

Belongs to the Maf family. YceF subfamily. A divalent metal cation serves as cofactor.

Its subcellular location is the cytoplasm. The enzyme catalyses N(7)-methyl-GTP + H2O = N(7)-methyl-GMP + diphosphate + H(+). Its function is as follows. Nucleoside triphosphate pyrophosphatase that hydrolyzes 7-methyl-GTP (m(7)GTP). May have a dual role in cell division arrest and in preventing the incorporation of modified nucleotides into cellular nucleic acids. The polypeptide is 7-methyl-GTP pyrophosphatase (Shewanella oneidensis (strain ATCC 700550 / JCM 31522 / CIP 106686 / LMG 19005 / NCIMB 14063 / MR-1)).